A 320-amino-acid chain; its full sequence is Mitochondrial glycine transporter (320 aa).

Solcar repeat units lie at residues 8–92 (SKTT…LRQG), 121–205 (LSNW…LKRR), and 223–307 (SSSS…LILR). A run of 6 helical transmembrane segments spans residues 14–39 (FAAG…TRVQ), 67–93 (GTLP…RQGL), 127–152 (LATG…VRYE), 180–203 (GFGA…EQLK), 227–253 (INFV…KTRL), and 282–300 (GLGL…AWTV).

The protein belongs to the mitochondrial carrier (TC 2.A.29) family. SLC25A38 subfamily.

The protein localises to the mitochondrion inner membrane. The enzyme catalyses glycine(in) = glycine(out). Functionally, mitochondrial glycine transporter that imports glycine into the mitochondrial matrix. Plays an important role in providing glycine for the first enzymatic step in heme biosynthesis, the condensation of glycine with succinyl-CoA to produce 5-aminolevulinate (ALA) in the mitochondrial matrix. The polypeptide is Mitochondrial glycine transporter (Aspergillus fumigatus (strain CBS 144.89 / FGSC A1163 / CEA10) (Neosartorya fumigata)).